The following is a 379-amino-acid chain: Putative thylakoid lumen peptidyl-prolyl cis-trans isomerase sll0408 (379 aa).

A signal peptide spans 1 to 33 (MQIIKTPLGIITRRGLQLSLLSLLLTMLSLTWA). One can recognise a PPIase cyclophilin-type domain in the interval 190–378 (GRATVEMTTN…SGADNLVNGN (189 aa)).

It is found in the cellular thylakoid lumen. It carries out the reaction [protein]-peptidylproline (omega=180) = [protein]-peptidylproline (omega=0). Its function is as follows. PPIases accelerate the folding of proteins. It catalyzes the cis-trans isomerization of proline imidic peptide bonds in oligopeptides. Required for the assembly and stabilization of PSII. The sequence is that of Putative thylakoid lumen peptidyl-prolyl cis-trans isomerase sll0408 from Synechocystis sp. (strain ATCC 27184 / PCC 6803 / Kazusa).